A 209-amino-acid chain; its full sequence is GTP-binding nuclear protein Ran1A (209 aa).

Residues 1–162 enclose the Small GTPase Ran-type domain; it reads NFKLVIVGDG…LYLARKLAGD (162 aa). Position 9-16 (9-16) interacts with GTP; it reads DGGTGKTT. A switch-I region spans residues 28 to 36; the sequence is KKYEPTIGV. GTP-binding positions include Gly-59, 113–116, and 141–143; these read NKVD and SAK. Residues 59-75 form a switch-II region; sequence GQEKFGGLRDGYYIHGQ. Low complexity predominate over residues 187–196; the sequence is QHEAELAQAA. Residues 187–209 are disordered; sequence QHEAELAQAASQPLPDDDDDAFD.

This sequence belongs to the small GTPase superfamily. Ran family. Found in a nuclear export complex with RanGTP, exportin and pre-miRNA.

Its subcellular location is the nucleus. Its function is as follows. GTP-binding protein involved in nucleocytoplasmic transport. Required for the import of protein into the nucleus and also for RNA export. Involved in chromatin condensation and control of cell cycle. The chain is GTP-binding nuclear protein Ran1A (RAN1A) from Lotus japonicus (Lotus corniculatus var. japonicus).